The following is a 487-amino-acid chain: N-succinylglutamate 5-semialdehyde dehydrogenase (487 aa).

NAD(+) is bound at residue 221–226 (GSSDTG). Residues Glu-244 and Cys-278 contribute to the active site.

The protein belongs to the aldehyde dehydrogenase family. AstD subfamily.

It catalyses the reaction N-succinyl-L-glutamate 5-semialdehyde + NAD(+) + H2O = N-succinyl-L-glutamate + NADH + 2 H(+). The protein operates within amino-acid degradation; L-arginine degradation via AST pathway; L-glutamate and succinate from L-arginine: step 4/5. Functionally, catalyzes the NAD-dependent reduction of succinylglutamate semialdehyde into succinylglutamate. The chain is N-succinylglutamate 5-semialdehyde dehydrogenase from Burkholderia ambifaria (strain ATCC BAA-244 / DSM 16087 / CCUG 44356 / LMG 19182 / AMMD) (Burkholderia cepacia (strain AMMD)).